The sequence spans 466 residues: Vimentin (466 aa).

Over residues 1-13 the composition is skewed to low complexity; it reads MSTRSVSSSSYRR. The segment at 1-32 is disordered; it reads MSTRSVSSSSYRRMFGGPGTGSRPSSTRSYVT. An N-acetylserine modification is found at Ser-2. Residues 2 to 95 are head; that stretch reads STRSVSSSSY…FSLADAINTE (94 aa). Phosphoserine occurs at positions 5, 7, 8, 9, and 10. Residue Ser-7 is glycosylated (O-linked (GlcNAc) serine; alternate). Thr-20 carries the post-translational modification Phosphothreonine. Residues 21 to 32 show a composition bias toward low complexity; the sequence is GSRPSSTRSYVT. Residues Ser-25 and Ser-26 each carry the phosphoserine modification. The O-linked (GlcNAc) threonine glycan is linked to Thr-33. A phosphoserine mark is found at Ser-34, Ser-39, Ser-42, Ser-47, Ser-49, and Ser-51. O-linked (GlcNAc) serine; alternate glycosylation is present at Ser-34. The residue at position 53 (Tyr-53) is a Phosphotyrosine. Ser-55 and Ser-56 each carry phosphoserine. The residue at position 61 (Tyr-61) is a Phosphotyrosine. Phosphoserine occurs at positions 66, 72, 73, 83, and 87. The segment at 96–131 is coil 1A; sequence FKNTRTNEKVELQELNDRFANYIDKVRFLEQQNKIL. The stretch at 96 to 131 forms a coiled coil; the sequence is FKNTRTNEKVELQELNDRFANYIDKVRFLEQQNKIL. Residues 103–411 form the IF rod domain; that stretch reads EKVELQELND…KLLEGEESRI (309 aa). A Glycyl lysine isopeptide (Lys-Gly) (interchain with G-Cter in SUMO2) cross-link involves residue Lys-104. Residue Tyr-117 is modified to Phosphotyrosine. 3 positions are modified to N6-acetyllysine; alternate: Lys-120, Lys-129, and Lys-139. 2 positions are modified to N6-succinyllysine; alternate: Lys-120 and Lys-129. Glycyl lysine isopeptide (Lys-Gly) (interchain with G-Cter in SUMO2); alternate cross-links involve residues Lys-120, Lys-129, and Lys-139. Positions 132–153 are linker 1; that stretch reads LAELEQLKGQGKSRLGDLYEEE. Ser-144 carries the post-translational modification Phosphoserine. A coiled-coil region spans residues 154–245; the sequence is MRELRRQVDQ…KLHDEEIQEL (92 aa). The coil 1B stretch occupies residues 154-245; the sequence is MRELRRQVDQ…KLHDEEIQEL (92 aa). The residue at position 168 (Lys-168) is an N6-acetyllysine. Position 188 is an N6-acetyllysine; alternate (Lys-188). Lys-188 carries the post-translational modification N6-succinyllysine; alternate. Position 214 is a phosphoserine (Ser-214). An N6-acetyllysine; alternate modification is found at Lys-223. Lys-223 participates in a covalent cross-link: Glycyl lysine isopeptide (Lys-Gly) (interchain with G-Cter in SUMO2); alternate. Position 226 is a phosphoserine (Ser-226). N6-acetyllysine is present on Lys-235. A linker 12 region spans residues 246–268; that stretch reads QAQIQDQHVQIDMDVSKPDLTAA. Residue Lys-262 forms a Glycyl lysine isopeptide (Lys-Gly) (interchain with G-Cter in SUMO2) linkage. The interval 269–407 is coil 2; that stretch reads LRDVRQQYES…ATYRKLLEGE (139 aa). Lys-294 is subject to N6-acetyllysine; alternate. An N6-succinyllysine; alternate modification is found at Lys-294. Lys-294 is covalently cross-linked (Glycyl lysine isopeptide (Lys-Gly) (interchain with G-Cter in SUMO2); alternate). Ser-299 is modified (phosphoserine). Positions 303-407 form a coiled coil; it reads NRNNDALRQA…ATYRKLLEGE (105 aa). A Glycyl lysine isopeptide (Lys-Gly) (interchain with G-Cter in SUMO2) cross-link involves residue Lys-313. Ser-325 bears the Phosphoserine mark. A [IL]-x-C-x-x-[DE] motif motif is present at residues 326-329; that stretch reads LTCE. An N6-acetyllysine; alternate modification is found at Lys-373. Lys-373 participates in a covalent cross-link: Glycyl lysine isopeptide (Lys-Gly) (interchain with G-Cter in SUMO2); alternate. The tail stretch occupies residues 408–466; it reads ESRIALPLPNFSSLNLRETNLDSLPLVDTHSKRTLLIKTVETRDGQVINETSQHHDDLE. Ser-409, Ser-419, and Ser-420 each carry phosphoserine. Phosphothreonine is present on Thr-426. Residue Ser-430 is modified to Phosphoserine. Residue Thr-436 is modified to Phosphothreonine. Phosphoserine is present on Ser-438. Lys-439 participates in a covalent cross-link: Glycyl lysine isopeptide (Lys-Gly) (interchain with G-Cter in SUMO2). Lys-445 bears the N6-acetyllysine; alternate mark. At Lys-445 the chain carries N6-succinyllysine; alternate. A Glycyl lysine isopeptide (Lys-Gly) (interchain with G-Cter in SUMO2); alternate cross-link involves residue Lys-445. Lys-445 is covalently cross-linked (Glycyl lysine isopeptide (Lys-Gly) (interchain with G-Cter in SUMO1); alternate). 2 positions are modified to phosphothreonine: Thr-446 and Thr-458. Ser-459 carries the phosphoserine modification.

This sequence belongs to the intermediate filament family. In terms of assembly, homomer assembled from elementary dimers. Identified in complexes that contain VIM, EZR, AHNAK, BFSP1, BFSP2, ANK2, PLEC, PRX and spectrin. Interacts with BCAS3. Interacts with LGSN. Interacts with SYNM. Interacts (via rod region) with PLEC (via CH 1 domain). Interacts with STK33. Interacts with LARP6. Interacts with RAB8B. Interacts with TOR1A; the interaction associates TOR1A with the cytoskeleton. Interacts with TOR1AIP1. Interacts with TOR1AIP1. Interacts with DIAPH1. Interacts with EPPK1; interaction is dependent of higher-order structure of intermediate filament. Interacts with the non-receptor tyrosine kinase SRMS; the interaction leads to phosphorylation of VIM. Interacts with NOD2. Interacts (via head region) with CORO1C. Interacts with HDGF. Interacts with PRKCE (via phorbol-ester/DAG-type 2 domain). Interacts with BFSP2. Interacts with PPL. Interacts with PKP1 and PKP2. Interacts with SCRIB (via PDZ domains); the interaction protects SCRIB from proteasomal degradation and facilitates SCRIB localization to intermediate filaments, the interaction is reduced by cell contact inhibition. In terms of processing, filament disassembly during mitosis is promoted by phosphorylation at Ser-55 as well as by nestin. One of the most prominent phosphoproteins in various cells of mesenchymal origin. Phosphorylation is enhanced during cell division, at which time vimentin filaments are significantly reorganized. Phosphorylation by PKN1 inhibits the formation of filaments. Phosphorylated at Ser-56 by CDK5 during neutrophil secretion in the cytoplasm. Phosphorylated by STK33. Phosphorylated on tyrosine residues by SRMS. Post-translationally, O-glycosylated during cytokinesis at sites identical or close to phosphorylation sites, this interferes with the phosphorylation status. S-nitrosylation is induced by interferon-gamma and oxidatively-modified low-densitity lipoprotein (LDL(ox)) possibly implicating the iNOS-S100A8/9 transnitrosylase complex.

It is found in the cytoplasm. The protein localises to the cytoskeleton. It localises to the nucleus matrix. The protein resides in the cell membrane. Vimentins are class-III intermediate filaments found in various non-epithelial cells, especially mesenchymal cells. Vimentin is attached to the nucleus, endoplasmic reticulum, and mitochondria, either laterally or terminally. Plays a role in cell directional movement, orientation, cell sheet organization and Golgi complex polarization at the cell migration front. Protects SCRIB from proteasomal degradation and facilitates its localization to intermediate filaments in a cell contact-mediated manner. Functionally, involved with LARP6 in the stabilization of type I collagen mRNAs for CO1A1 and CO1A2. The sequence is that of Vimentin (VIM) from Canis lupus familiaris (Dog).